A 190-amino-acid polypeptide reads, in one-letter code: Peptidyl-prolyl cis-trans isomerase A (190 aa).

The signal sequence occupies residues 1 to 24 (MFKSTLAAMAAVFALSALSPAAMA). The PPIase cyclophilin-type domain maps to 27–188 (GDPHVLLTTS…KPVVILSAKV (162 aa)).

The protein belongs to the cyclophilin-type PPIase family.

The protein localises to the periplasm. The catalysed reaction is [protein]-peptidylproline (omega=180) = [protein]-peptidylproline (omega=0). PPIases accelerate the folding of proteins. It catalyzes the cis-trans isomerization of proline imidic peptide bonds in oligopeptides. The chain is Peptidyl-prolyl cis-trans isomerase A (ppiA) from Escherichia coli O157:H7.